The following is a 274-amino-acid chain: Long chain fatty acid elongase 2 (274 aa).

Helical transmembrane passes span Met-29–Phe-49, Phe-73–Met-93, Phe-115–Val-135, Pro-140–Tyr-160, Ser-170–Leu-190, Phe-201–Val-221, and Val-238–Tyr-258.

The protein belongs to the ELO family. As to expression, expressed in various tissues and parts of the body, including the ventral cord, pharyngeal muscles, uterus, and the tail, and most strongly in intestinal cells.

The protein resides in the membrane. It carries out the reaction hexadecanoyl-CoA + malonyl-CoA + H(+) = 3-oxooctadecanoyl-CoA + CO2 + CoA. Its pathway is lipid metabolism; fatty acid biosynthesis. Functionally, catalyzes the first and rate-limiting reaction of the four reactions that constitute the long-chain fatty acids elongation cycle. Uses malonyl-CoA to add 2 carbons per cycle to the chain of long-chain fatty acids. Condensing enzyme responsible for the elongation of palmitate (hexadecanoate, 16:0), also involved in polyunsaturated fatty acid (PUFA) biosynthesis. This is Long chain fatty acid elongase 2 from Caenorhabditis elegans.